The sequence spans 267 residues: MEMO1 family protein MM_1761 (267 aa).

It belongs to the MEMO1 family.

The chain is MEMO1 family protein MM_1761 from Methanosarcina mazei (strain ATCC BAA-159 / DSM 3647 / Goe1 / Go1 / JCM 11833 / OCM 88) (Methanosarcina frisia).